A 235-amino-acid chain; its full sequence is Glucosamine-6-phosphate deaminase (235 aa).

Aspartate 62 (proton acceptor; for enolization step) is an active-site residue. Catalysis depends on asparagine 128, which acts as the For ring-opening step. Histidine 130 (proton acceptor; for ring-opening step) is an active-site residue. Glutamate 135 serves as the catalytic For ring-opening step.

Belongs to the glucosamine/galactosamine-6-phosphate isomerase family. NagB subfamily.

It catalyses the reaction alpha-D-glucosamine 6-phosphate + H2O = beta-D-fructose 6-phosphate + NH4(+). It functions in the pathway amino-sugar metabolism; N-acetylneuraminate degradation; D-fructose 6-phosphate from N-acetylneuraminate: step 5/5. Functionally, catalyzes the reversible isomerization-deamination of glucosamine 6-phosphate (GlcN6P) to form fructose 6-phosphate (Fru6P) and ammonium ion. The chain is Glucosamine-6-phosphate deaminase from Latilactobacillus sakei subsp. sakei (strain 23K) (Lactobacillus sakei subsp. sakei).